Reading from the N-terminus, the 205-residue chain is Guanylate kinase (205 aa).

The Guanylate kinase-like domain occupies 3 to 181 (GSLYIISAPS…ALSELHSIFL (179 aa)). 10-17 (APSGAGKT) serves as a coordination point for ATP.

Belongs to the guanylate kinase family.

It is found in the cytoplasm. The enzyme catalyses GMP + ATP = GDP + ADP. Essential for recycling GMP and indirectly, cGMP. The chain is Guanylate kinase from Hydrogenovibrio crunogenus (strain DSM 25203 / XCL-2) (Thiomicrospira crunogena).